Consider the following 107-residue polypeptide: Nucleoid-associated protein A1E_05550 (107 aa).

Belongs to the YbaB/EbfC family. In terms of assembly, homodimer.

It is found in the cytoplasm. It localises to the nucleoid. Functionally, binds to DNA and alters its conformation. May be involved in regulation of gene expression, nucleoid organization and DNA protection. This Rickettsia canadensis (strain McKiel) protein is Nucleoid-associated protein A1E_05550.